The following is a 369-amino-acid chain: Type 2 DNA topoisomerase 6 subunit A (369 aa).

One can recognise a Topo IIA-type catalytic domain in the interval 10–146 (KPREIAKQKI…LGFIPEEDGS (137 aa)). The O-(5'-phospho-DNA)-tyrosine intermediate role is filled by Tyr-103. Mg(2+)-binding residues include Glu-197 and Asp-249.

Belongs to the TOP6A family. As to quaternary structure, homodimer. Heterotetramer of two Top6A and two Top6B chains. Requires Mg(2+) as cofactor.

It catalyses the reaction ATP-dependent breakage, passage and rejoining of double-stranded DNA.. Its function is as follows. Relaxes both positive and negative superturns and exhibits a strong decatenase activity. This is Type 2 DNA topoisomerase 6 subunit A from Methanocaldococcus jannaschii (strain ATCC 43067 / DSM 2661 / JAL-1 / JCM 10045 / NBRC 100440) (Methanococcus jannaschii).